We begin with the raw amino-acid sequence, 365 residues long: MPVNMVSASEYRRILVSDHPIMDARAPVEFTKGAFPASRNHPLMEDEERRLVGTCYKQNGQQAAIDLGHSLVTGEIKQQRLDAWQRYFTKHPDAYLYCFRGGLRSKLTQQWLKEAGIDVPFIEGGYKAMRQFLIETIDNAASQNPMLILSGITGSGKTDFLLARNDSVDLEGIAHHRGSSFGRYHEPQPTQINFENALAVALLKHQDSQAKHLLLEDESFLIGRSALPQAFYKGMQQANVVVLEEPMEARLTRLLNEYVHKMHSGYIQRLGEEAGFAAFAEYLALSITGIKKRLGGKQHDEFQAIITNALNIQQSRGDTSAHIEWIELLLSKYYDPMYQYQIDKKAERILFKGDHLAMHQWLDAN.

Residues 15 to 138 (LVSDHPIMDA…MRQFLIETID (124 aa)) enclose the Rhodanese domain. The active-site S-selanylcysteine intermediate is the Cys98.

The protein belongs to the SelU family. As to quaternary structure, monomer.

The enzyme catalyses 5-methylaminomethyl-2-thiouridine(34) in tRNA + selenophosphate + (2E)-geranyl diphosphate + H2O + H(+) = 5-methylaminomethyl-2-selenouridine(34) in tRNA + (2E)-thiogeraniol + phosphate + diphosphate. It catalyses the reaction 5-methylaminomethyl-2-thiouridine(34) in tRNA + (2E)-geranyl diphosphate = 5-methylaminomethyl-S-(2E)-geranyl-thiouridine(34) in tRNA + diphosphate. The catalysed reaction is 5-methylaminomethyl-S-(2E)-geranyl-thiouridine(34) in tRNA + selenophosphate + H(+) = 5-methylaminomethyl-2-(Se-phospho)selenouridine(34) in tRNA + (2E)-thiogeraniol. It carries out the reaction 5-methylaminomethyl-2-(Se-phospho)selenouridine(34) in tRNA + H2O = 5-methylaminomethyl-2-selenouridine(34) in tRNA + phosphate. Its function is as follows. Involved in the post-transcriptional modification of the uridine at the wobble position (U34) of tRNA(Lys), tRNA(Glu) and tRNA(Gln). Catalyzes the conversion of 2-thiouridine (S2U-RNA) to 2-selenouridine (Se2U-RNA). Acts in a two-step process involving geranylation of 2-thiouridine (S2U) to S-geranyl-2-thiouridine (geS2U) and subsequent selenation of the latter derivative to 2-selenouridine (Se2U) in the tRNA chain. This is tRNA 2-selenouridine synthase from Shewanella piezotolerans (strain WP3 / JCM 13877).